The chain runs to 409 residues: MKGVIMIIDGMADRPLEKLSGRTPLEAASTPNMDRIAESGINGIMDPIKPGVRAGSDTSHLSILGYDPYRVYTGRGPFEAAGVGLDVKPGDIAFRCNFATADEDMIITDRRAGRIRSGTSSIARTINSMTIEGFEDVEIIFRESTGHRAVLVLRGPGLGDKVSDADPKVEGKPPKKIKALDGSPESRKTAEVLNRIVKESYEILRDHPVNTGRIERGEAPANIILPRGAGAVPHVEKFQERYDLKAACIAETGLIKGIGHLTGMDVIDVEGATGGIDTDLESIKNAISSAIAADYDFLLINIDGADEAGHDGDLEGKVRFIERVDSILGDLMGDDIYFILTADHSTPVSVMDHTGDPVPIAITGPEVRVDDVTSFSERAAAAGGLCRIRGSDVMDILLDLMNKKEKFGA.

Residues 163 to 173 are compositionally biased toward basic and acidic residues; it reads SDADPKVEGKP. The interval 163-184 is disordered; the sequence is SDADPKVEGKPPKKIKALDGSP.

The protein belongs to the BPG-independent phosphoglycerate mutase family. A-PGAM subfamily.

It catalyses the reaction (2R)-2-phosphoglycerate = (2R)-3-phosphoglycerate. The protein operates within carbohydrate degradation; glycolysis; pyruvate from D-glyceraldehyde 3-phosphate: step 3/5. In terms of biological role, catalyzes the interconversion of 2-phosphoglycerate and 3-phosphoglycerate. This is 2,3-bisphosphoglycerate-independent phosphoglycerate mutase 1 (apgM1) from Methanothermobacter thermautotrophicus (strain ATCC 29096 / DSM 1053 / JCM 10044 / NBRC 100330 / Delta H) (Methanobacterium thermoautotrophicum).